Consider the following 248-residue polypeptide: Granzyme F (248 aa).

A signal peptide spans 1-18; the sequence is MPPILILLTLLLPLRAGA. A propeptide spanning residues 19–20 is cleaved from the precursor; it reads EE. The 226-residue stretch at 21 to 246 folds into the Peptidase S1 domain; the sequence is IIGGHEVKPH…YLPWISRNMK (226 aa). A disulfide bridge connects residues Cys-50 and Cys-66. His-65 functions as the Charge relay system in the catalytic mechanism. An N-linked (GlcNAc...) asparagine glycan is attached at Asn-106. Asp-109 functions as the Charge relay system in the catalytic mechanism. 2 disulfide bridges follow: Cys-143-Cys-210 and Cys-175-Cys-189. The N-linked (GlcNAc...) asparagine glycan is linked to Asn-154. Ser-204 acts as the Charge relay system in catalysis. The N-linked (GlcNAc...) asparagine glycan is linked to Asn-223.

This sequence belongs to the peptidase S1 family. Granzyme subfamily.

It localises to the cytolytic granule. This enzyme is probably necessary for target cell lysis in cell-mediated immune responses. This is Granzyme F (Gzmf) from Mus musculus (Mouse).